We begin with the raw amino-acid sequence, 249 residues long: Proteasome subunit alpha type-7-1A (249 aa).

Belongs to the peptidase T1A family. In terms of assembly, the 26S proteasome consists of a 20S proteasome core and two 19S regulatory subunits. The 20S proteasome core is composed of 28 subunits that are arranged in four stacked rings, resulting in a barrel-shaped structure. The two end rings are each formed by seven alpha subunits, and the two central rings are each formed by seven beta subunits. The catalytic chamber with the active sites is on the inside of the barrel. Testis specific.

The protein localises to the cytoplasm. The protein resides in the nucleus. The proteasome is a multicatalytic proteinase complex which is characterized by its ability to cleave peptides with Arg, Phe, Tyr, Leu, and Glu adjacent to the leaving group at neutral or slightly basic pH. The proteasome has an ATP-dependent proteolytic activity. In Drosophila melanogaster (Fruit fly), this protein is Proteasome subunit alpha type-7-1A (Prosalpha4T1).